A 464-amino-acid polypeptide reads, in one-letter code: Asparagine--tRNA ligase (464 aa).

The protein belongs to the class-II aminoacyl-tRNA synthetase family. As to quaternary structure, homodimer.

The protein localises to the cytoplasm. The catalysed reaction is tRNA(Asn) + L-asparagine + ATP = L-asparaginyl-tRNA(Asn) + AMP + diphosphate + H(+). This is Asparagine--tRNA ligase from Xanthomonas axonopodis pv. citri (strain 306).